Consider the following 235-residue polypeptide: tRNA (guanine-N(1)-)-methyltransferase (235 aa).

S-adenosyl-L-methionine-binding positions include G112 and 132 to 137 (LGDFVL).

This sequence belongs to the RNA methyltransferase TrmD family. As to quaternary structure, homodimer.

The protein resides in the cytoplasm. The catalysed reaction is guanosine(37) in tRNA + S-adenosyl-L-methionine = N(1)-methylguanosine(37) in tRNA + S-adenosyl-L-homocysteine + H(+). Specifically methylates guanosine-37 in various tRNAs. In Acaryochloris marina (strain MBIC 11017), this protein is tRNA (guanine-N(1)-)-methyltransferase.